A 200-amino-acid chain; its full sequence is dITP/XTP pyrophosphatase (200 aa).

8 to 13 (TGNQGK) provides a ligand contact to substrate. Asp69 (proton acceptor) is an active-site residue. Asp69 provides a ligand contact to Mg(2+). Residues Ser70, 154-157 (FGYD), Lys177, and 182-183 (HR) each bind substrate.

The protein belongs to the HAM1 NTPase family. In terms of assembly, homodimer. Mg(2+) serves as cofactor.

The catalysed reaction is XTP + H2O = XMP + diphosphate + H(+). It carries out the reaction dITP + H2O = dIMP + diphosphate + H(+). The enzyme catalyses ITP + H2O = IMP + diphosphate + H(+). In terms of biological role, pyrophosphatase that catalyzes the hydrolysis of nucleoside triphosphates to their monophosphate derivatives, with a high preference for the non-canonical purine nucleotides XTP (xanthosine triphosphate), dITP (deoxyinosine triphosphate) and ITP. Seems to function as a house-cleaning enzyme that removes non-canonical purine nucleotides from the nucleotide pool, thus preventing their incorporation into DNA/RNA and avoiding chromosomal lesions. This is dITP/XTP pyrophosphatase from Vibrio vulnificus (strain CMCP6).